Here is a 393-residue protein sequence, read N- to C-terminus: Dual-specificity RNA methyltransferase RlmN (393 aa).

The active-site Proton acceptor is Glu114. Residues 120-359 (EDDRATLCVS…VIVRKTRGDD (240 aa)) enclose the Radical SAM core domain. Cys127 and Cys364 are joined by a disulfide. Cys134, Cys138, and Cys141 together coordinate [4Fe-4S] cluster. Residues 188–189 (GE), Ser220, 242–244 (SLH), and Asn321 contribute to the S-adenosyl-L-methionine site. Cys364 acts as the S-methylcysteine intermediate in catalysis.

This sequence belongs to the radical SAM superfamily. RlmN family. [4Fe-4S] cluster serves as cofactor.

It localises to the cytoplasm. The enzyme catalyses adenosine(2503) in 23S rRNA + 2 reduced [2Fe-2S]-[ferredoxin] + 2 S-adenosyl-L-methionine = 2-methyladenosine(2503) in 23S rRNA + 5'-deoxyadenosine + L-methionine + 2 oxidized [2Fe-2S]-[ferredoxin] + S-adenosyl-L-homocysteine. It carries out the reaction adenosine(37) in tRNA + 2 reduced [2Fe-2S]-[ferredoxin] + 2 S-adenosyl-L-methionine = 2-methyladenosine(37) in tRNA + 5'-deoxyadenosine + L-methionine + 2 oxidized [2Fe-2S]-[ferredoxin] + S-adenosyl-L-homocysteine. Functionally, specifically methylates position 2 of adenine 2503 in 23S rRNA and position 2 of adenine 37 in tRNAs. m2A2503 modification seems to play a crucial role in the proofreading step occurring at the peptidyl transferase center and thus would serve to optimize ribosomal fidelity. The protein is Dual-specificity RNA methyltransferase RlmN of Actinobacillus pleuropneumoniae serotype 5b (strain L20).